Reading from the N-terminus, the 148-residue chain is Transcriptional regulator MraZ (148 aa).

2 consecutive SpoVT-AbrB domains span residues 5 to 53 and 82 to 125; these read ETAI…VEKE and SALL…SEQA.

It belongs to the MraZ family. Forms oligomers.

It is found in the cytoplasm. It localises to the nucleoid. This Xylella fastidiosa (strain Temecula1 / ATCC 700964) protein is Transcriptional regulator MraZ.